Reading from the N-terminus, the 255-residue chain is Tryptophan synthase alpha chain (255 aa).

Catalysis depends on proton acceptor residues E44 and D55.

Belongs to the TrpA family. In terms of assembly, tetramer of two alpha and two beta chains.

It catalyses the reaction (1S,2R)-1-C-(indol-3-yl)glycerol 3-phosphate + L-serine = D-glyceraldehyde 3-phosphate + L-tryptophan + H2O. The protein operates within amino-acid biosynthesis; L-tryptophan biosynthesis; L-tryptophan from chorismate: step 5/5. Its function is as follows. The alpha subunit is responsible for the aldol cleavage of indoleglycerol phosphate to indole and glyceraldehyde 3-phosphate. The polypeptide is Tryptophan synthase alpha chain (Dehalococcoides mccartyi (strain ATCC BAA-2100 / JCM 16839 / KCTC 5957 / BAV1)).